The sequence spans 129 residues: MKFIIALAALIAVACALPVSNDNFRHEFDHMIVNTATQRFHEIEKFLLHITHEVDDLEKTGNKDEKARLLRELTVSEAFIEGSRGYFQRELKRTDLDLLEKFNFEAALATGDLLLKDLKALQKRVQDSE.

The signal sequence occupies residues 1–16 (MKFIIALAALIAVACA).

It belongs to the mite group 5 allergen family. In terms of assembly, may exist as homodimer and homotrimer. Midgut and hindgut contents as well as fecal pellets (at protein level).

The sequence is that of Mite allergen Blo t 21 from Blomia tropicalis (Mite).